The primary structure comprises 215 residues: Probable phosphoglycerate mutase GpmB (215 aa).

Substrate is bound by residues 8–15 (RHGETEWN), 21–22 (QG), Arg-58, Arg-60, 82–85 (ELHM), and 151–152 (GI). The Tele-phosphohistidine intermediate role is filled by His-9. The Proton donor/acceptor role is filled by Glu-82.

This sequence belongs to the phosphoglycerate mutase family. GpmB subfamily.

The catalysed reaction is (2R)-2-phosphoglycerate = (2R)-3-phosphoglycerate. Its pathway is carbohydrate degradation; glycolysis; pyruvate from D-glyceraldehyde 3-phosphate: step 3/5. The chain is Probable phosphoglycerate mutase GpmB from Serratia proteamaculans (strain 568).